The following is a 580-amino-acid chain: Adenine deaminase (580 aa).

It belongs to the metallo-dependent hydrolases superfamily. Adenine deaminase family. Mn(2+) serves as cofactor.

It catalyses the reaction adenine + H2O + H(+) = hypoxanthine + NH4(+). This is Adenine deaminase from Listeria monocytogenes serovar 1/2a (strain ATCC BAA-679 / EGD-e).